Reading from the N-terminus, the 91-residue chain is Ice-structuring protein (91 aa).

Positions 1–21 (MALSLFTVGQLIFLFWTMRIT) are cleaved as a signal peptide. Positions 22-39 (EANPDPAAKAVPAAAAPD) are cleaved as a propeptide — removed by a dipeptidylpeptidase.

It belongs to the type-I AFP family.

It is found in the secreted. Functionally, contributes to protect fish blood from freezing at subzero sea water temperatures. Lowers the blood freezing point. Binds to nascent ice crystals and prevents further growth. This chain is Ice-structuring protein, found in Pseudopleuronectes americanus (Winter flounder).